We begin with the raw amino-acid sequence, 506 residues long: Maturase K (506 aa).

It belongs to the intron maturase 2 family. MatK subfamily.

It is found in the plastid. Its subcellular location is the chloroplast. In terms of biological role, usually encoded in the trnK tRNA gene intron. Probably assists in splicing its own and other chloroplast group II introns. The chain is Maturase K from Rhododendron hippophaeoides (Rhododendron).